The following is a 621-amino-acid chain: uncharacterized protein (621 aa).

Transmembrane regions (helical) follow at residues 240–260, 548–568, and 587–607; these read FFDA…NLLW, LGIV…VWTV, and VIIG…LTFM.

The protein resides in the cell membrane. This is an uncharacterized protein from Mycoplasma pneumoniae (strain ATCC 29342 / M129 / Subtype 1) (Mycoplasmoides pneumoniae).